Here is a 436-residue protein sequence, read N- to C-terminus: GTPase Der (436 aa).

EngA-type G domains are found at residues 4 to 167 (PVVA…PKEE) and 176 to 351 (VKFS…DNHS). GTP is bound by residues 10-17 (GRPNVGKS), 57-61 (DTGGI), 119-122 (NKVD), 182-189 (GRPNVGKS), 229-233 (DTAGM), and 294-297 (NKWD). Residues 352–436 (LRVQSSMLND…PIRVIARKRK (85 aa)) form the KH-like domain.

The protein belongs to the TRAFAC class TrmE-Era-EngA-EngB-Septin-like GTPase superfamily. EngA (Der) GTPase family. As to quaternary structure, associates with the 50S ribosomal subunit.

Its function is as follows. GTPase that plays an essential role in the late steps of ribosome biogenesis. In Listeria welshimeri serovar 6b (strain ATCC 35897 / DSM 20650 / CCUG 15529 / CIP 8149 / NCTC 11857 / SLCC 5334 / V8), this protein is GTPase Der.